A 175-amino-acid polypeptide reads, in one-letter code: Catabolic 3-dehydroquinase (175 aa).

The active-site Proton acceptor is Tyr-23. Substrate-binding residues include Asn-74, His-80, and Asp-87. His-100 functions as the Proton donor in the catalytic mechanism. Substrate is bound by residues 101–102 (IS) and Arg-111.

This sequence belongs to the type-II 3-dehydroquinase family. Homododecamer. Adopts a ring-like structure, composed of an arrangement of two hexameric rings stacked on top of one another.

It carries out the reaction 3-dehydroquinate = 3-dehydroshikimate + H2O. It participates in aromatic compound metabolism; 3,4-dihydroxybenzoate biosynthesis; 3,4-dihydroxybenzoate from 3-dehydroquinate: step 1/2. Functionally, is involved in the catabolism of quinate. Allows the utilization of quinate as carbon source via the beta-ketoadipate pathway. The chain is Catabolic 3-dehydroquinase from Talaromyces marneffei (strain ATCC 18224 / CBS 334.59 / QM 7333) (Penicillium marneffei).